The chain runs to 360 residues: GTP 3',8-cyclase (360 aa).

Positions 1 to 31 are disordered; the sequence is MTVTALGVPTVRGRSEGSAVASDAPGDGPLL. Residues 33-251 form the Radical SAM core domain; it reads RFGRSATDLR…LQPHFRLRPD (219 aa). Residue Arg-42 coordinates GTP. Cys-49 and Cys-53 together coordinate [4Fe-4S] cluster. Position 55 (Tyr-55) interacts with S-adenosyl-L-methionine. [4Fe-4S] cluster is bound at residue Cys-56. Residue Arg-93 participates in GTP binding. An S-adenosyl-L-methionine-binding site is contributed by Gly-97. Thr-124 serves as a coordination point for GTP. Ser-148 is an S-adenosyl-L-methionine binding site. A GTP-binding site is contributed by Lys-185. Met-219 lines the S-adenosyl-L-methionine pocket. [4Fe-4S] cluster-binding residues include Cys-287 and Cys-290. 292–294 is a binding site for GTP; sequence RTR. A [4Fe-4S] cluster-binding site is contributed by Cys-304.

The protein belongs to the radical SAM superfamily. MoaA family. Monomer and homodimer. The cofactor is [4Fe-4S] cluster.

The catalysed reaction is GTP + AH2 + S-adenosyl-L-methionine = (8S)-3',8-cyclo-7,8-dihydroguanosine 5'-triphosphate + 5'-deoxyadenosine + L-methionine + A + H(+). Its pathway is cofactor biosynthesis; molybdopterin biosynthesis. Functionally, catalyzes the cyclization of GTP to (8S)-3',8-cyclo-7,8-dihydroguanosine 5'-triphosphate. The polypeptide is GTP 3',8-cyclase (Mycobacterium ulcerans (strain Agy99)).